A 248-amino-acid chain; its full sequence is Carbohydrate deacetylase 2 (248 aa).

His59 and His123 together coordinate Mg(2+).

Belongs to the YdjC deacetylase family. Homodimer. The cofactor is Mg(2+).

Its function is as follows. Probably catalyzes the deacetylation of acetylated carbohydrates an important step in the degradation of oligosaccharides. The chain is Carbohydrate deacetylase 2 from Listeria innocua serovar 6a (strain ATCC BAA-680 / CLIP 11262).